A 99-amino-acid polypeptide reads, in one-letter code: Late cornified envelope protein 4A (99 aa).

Positions 78–99 (CYGSGSGQQSGGSGCCSGGGCC) are disordered. Residues 81-99 (SGSGQQSGGSGCCSGGGCC) show a composition bias toward gly residues.

It belongs to the LCE family. Interacts with CYSRT1; the interaction is direct. In terms of tissue distribution, skin-specific. Expression was readily detected in adult trunk skin, adult arm skin, fetal skin, penal skin, vulva, esophagus and tongue. Not expressed in the cervix, rectum, lung, colon, or placenta.

In terms of biological role, precursors of the cornified envelope of the stratum corneum. The chain is Late cornified envelope protein 4A (LCE4A) from Homo sapiens (Human).